The sequence spans 533 residues: Amidophosphoribosyltransferase (533 aa).

Cys2 acts as the Nucleophile in catalysis. Residues 2 to 238 enclose the Glutamine amidotransferase type-2 domain; sequence CGILALMLAD…PGECVFIRRS (237 aa). The Mg(2+) site is built by Asp383 and Asp384. A Phosphoserine modification is found at Ser506.

This sequence in the C-terminal section; belongs to the purine/pyrimidine phosphoribosyltransferase family. Requires Mg(2+) as cofactor.

It carries out the reaction 5-phospho-beta-D-ribosylamine + L-glutamate + diphosphate = 5-phospho-alpha-D-ribose 1-diphosphate + L-glutamine + H2O. It functions in the pathway purine metabolism; IMP biosynthesis via de novo pathway; N(1)-(5-phospho-D-ribosyl)glycinamide from 5-phospho-alpha-D-ribose 1-diphosphate: step 1/2. The protein is Amidophosphoribosyltransferase (ade4) of Schizosaccharomyces pombe (strain 972 / ATCC 24843) (Fission yeast).